Reading from the N-terminus, the 533-residue chain is MKKNLKILVITGGVISGIGKGVTSASIARLFRYDFRVTPIKCDGYLNTDPGTINPVEHGEVFVLDDGGEVDMDFGHYERFLNLNAKSSWNITMGKIYKKILENERKGKYLGRTVQLIPHVTDEIKSTIFQIASSENSDMLIIEIGGTVGDMENILFIETVRQIRQEIGSGNISFIHLTYVPSPAGINEQKSKPTQQSVKTLNKAGIFPDLIIARSSQVLTDQIRKKVAMFCNVESTSIIDNVDVSTIYEIPISFYKQGVHEILSSKLNIKVDPKIEELSKLVGVIKSNFFVPKKIINIAICGKYAELDDSYASIRESLVHVAAHLDLLIKSTLIDSNDLNESCLKEFDGIIVPGGFGGKGYEGKIMAIKYARENNIPFLGICLGLQLAVIEFARNVCGILDADTEENLARDKPLKSPVIHLLPEQKGIKDKGATMRLGGYPVILKKNTIAFKLYGQDRIIERFRHRYEVNNDYIDLFAKNGLIVSGFSSDFKMAKLIEIPENKFFVACQFHPELITRIENPAKLFLGLIKACI.

Residues 1–269 (MKKNLKILVI…HEILSSKLNI (269 aa)) are amidoligase domain. Ser-16 lines the CTP pocket. Ser-16 lines the UTP pocket. Residues 17-22 (GIGKGV) and Asp-73 each bind ATP. Mg(2+)-binding residues include Asp-73 and Glu-143. CTP-binding positions include 150–152 (DME), 190–195 (KSKPTQ), and Lys-226. Residues 190–195 (KSKPTQ) and Lys-226 contribute to the UTP site. The 230-residue stretch at 304–533 (YAELDDSYAS…LFLGLIKACI (230 aa)) folds into the Glutamine amidotransferase type-1 domain. Position 355 (Gly-355) interacts with L-glutamine. Cys-382 acts as the Nucleophile; for glutamine hydrolysis in catalysis. L-glutamine is bound by residues 383–386 (LGLQ), Glu-406, and Arg-466. Active-site residues include His-511 and Glu-513.

The protein belongs to the CTP synthase family. In terms of assembly, homotetramer.

The enzyme catalyses UTP + L-glutamine + ATP + H2O = CTP + L-glutamate + ADP + phosphate + 2 H(+). It catalyses the reaction L-glutamine + H2O = L-glutamate + NH4(+). The catalysed reaction is UTP + NH4(+) + ATP = CTP + ADP + phosphate + 2 H(+). Its pathway is pyrimidine metabolism; CTP biosynthesis via de novo pathway; CTP from UDP: step 2/2. Its activity is regulated as follows. Allosterically activated by GTP, when glutamine is the substrate; GTP has no effect on the reaction when ammonia is the substrate. The allosteric effector GTP functions by stabilizing the protein conformation that binds the tetrahedral intermediate(s) formed during glutamine hydrolysis. Inhibited by the product CTP, via allosteric rather than competitive inhibition. Catalyzes the ATP-dependent amination of UTP to CTP with either L-glutamine or ammonia as the source of nitrogen. Regulates intracellular CTP levels through interactions with the four ribonucleotide triphosphates. This chain is CTP synthase, found in Borreliella burgdorferi (strain ATCC 35210 / DSM 4680 / CIP 102532 / B31) (Borrelia burgdorferi).